Consider the following 215-residue polypeptide: Transcription factor LAX PANICLE 1 (215 aa).

Residues 1-48 are disordered; it reads MHDPRGFPIHPQPYHLHPTAGGLGEGRMRGGGRRRPGAKLSTDPQSVA. A basic motif; degenerate region spans residues 40-53; sequence LSTDPQSVAARERR. In terms of domain architecture, bHLH spans 40 to 89; it reads LSTDPQSVAARERRHRISDRFRVLRSLVPGGSKMDTVSMLEQAIHYVKFL. A helix-loop-helix motif region spans residues 54–89; it reads HRISDRFRVLRSLVPGGSKMDTVSMLEQAIHYVKFL.

This sequence belongs to the bHLH protein family. Efficient DNA binding requires dimerization with another bHLH protein. Interacts with LAX2. In terms of tissue distribution, expressed in the boundary between the shoot apical meristem (SAM) and the region of new meristem formation.

The protein resides in the nucleus. Transcription factor that seems to regulate organogenesis in postembryonic development. Involved in the regulation of shoot branching by controlling axillary meristem initiation. Functions in association with LAX2 to regulate the process of AM formation. Possesses transactivation activity in yeast. This Oryza sativa subsp. japonica (Rice) protein is Transcription factor LAX PANICLE 1.